Here is a 314-residue protein sequence, read N- to C-terminus: CBASS oligonucleotide cyclase CdnC (314 aa).

Lys60 serves as a coordination point for ATP. Mg(2+)-binding residues include Asp73 and Asp75. Residues Asp75, Lys186, 197-199 (KSF), and Asn263 contribute to the ATP site.

It belongs to the CD-NTase family. C01 subfamily. Forms complexes with Cap7 with 1:1 and 2:2 stoichimetry, and a 1:1:6 CdnC:Cap7:Cap6 complex. The cofactor is Mg(2+).

Its function is as follows. Cyclic nucleotide synthase (second messenger synthase) of a CBASS antivirus system. CBASS (cyclic oligonucleotide-based antiphage signaling system) provides immunity against bacteriophage. The CD-NTase protein synthesizes cyclic nucleotides in response to infection; these serve as specific second messenger signals. The signals activate a diverse range of effectors, leading to bacterial cell death and thus abortive phage infection. A type III CBASS system. Expression of this CBASS system (Cap18-Cap6-Cap7-CdnC-CapW-Cap17) in a susceptible E.coli (strain MG1655) confers resistance to bacteriophage P1. Probable cyclic nucleotide synthase that upon activation catalyzes the synthesis of a cyclic nucleotide. A cyclase activity for this enzyme was not identified in. The sequence is that of CBASS oligonucleotide cyclase CdnC from Escherichia coli (strain KTE188).